A 400-amino-acid polypeptide reads, in one-letter code: Serpin E3 (400 aa).

The first 19 residues, 1–19 (MQSLLLALLLLPVCSPGGA), serve as a signal peptide directing secretion. N-linked (GlcNAc...) asparagine glycosylation is present at asparagine 46.

This sequence belongs to the serpin family.

Its subcellular location is the secreted. Functionally, probable serine protease inhibitor. In Bos taurus (Bovine), this protein is Serpin E3 (SERPINE3).